A 150-amino-acid polypeptide reads, in one-letter code: Ribonuclease H (150 aa).

Residues 1–141 (MKFIEVHTDG…VDVLARNQAI (141 aa)) enclose the RNase H type-1 domain. Mg(2+)-binding residues include aspartate 9, glutamate 47, aspartate 69, and aspartate 133.

It belongs to the RNase H family. Monomer. Requires Mg(2+) as cofactor.

The protein localises to the cytoplasm. It catalyses the reaction Endonucleolytic cleavage to 5'-phosphomonoester.. Its function is as follows. Endonuclease that specifically degrades the RNA of RNA-DNA hybrids. The protein is Ribonuclease H of Xanthomonas euvesicatoria pv. vesicatoria (strain 85-10) (Xanthomonas campestris pv. vesicatoria).